We begin with the raw amino-acid sequence, 391 residues long: Histamine H4 receptor (391 aa).

Residues Met-1–Ala-19 lie on the Extracellular side of the membrane. Asn-5 carries an N-linked (GlcNAc...) asparagine glycan. The chain crosses the membrane as a helical span at residues Phe-20–Phe-40. The Cytoplasmic segment spans residues Val-41–Tyr-52. A helical membrane pass occupies residues Phe-53–Ile-73. At Pro-74–Cys-87 the chain is on the extracellular side. A disulfide bridge links Cys-87 with Cys-166. The helical transmembrane segment at Met-88 to Ile-108 threads the bilayer. At Ser-109–Lys-131 the chain is on the cytoplasmic side. Residues Ile-132–Leu-152 form a helical membrane-spanning segment. Over Ala-153 to Trp-174 the chain is Extracellular. Asn-159 carries an N-linked (GlcNAc...) asparagine glycan. Residues Tyr-175–Phe-195 form a helical membrane-spanning segment. The Cytoplasmic portion of the chain corresponds to Asn-196–Ser-306. Residues Thr-238–Lys-258 form a disordered region. Residues Ala-247–Arg-256 are compositionally biased toward basic and acidic residues. The helical transmembrane segment at Leu-307–Val-327 threads the bilayer. Residues Leu-328–Ser-343 are Extracellular-facing. The chain crosses the membrane as a helical span at residues Ile-344 to His-364. Residues Arg-365 to Ser-391 lie on the Cytoplasmic side of the membrane.

This sequence belongs to the G-protein coupled receptor 1 family. As to quaternary structure, interacts with TSPAN4.

It is found in the cell membrane. Functionally, the H4 subclass of histamine receptors could mediate the histamine signals in peripheral tissues. Displays a significant level of constitutive activity (spontaneous activity in the absence of agonist). This is Histamine H4 receptor (Hrh4) from Mus musculus (Mouse).